The chain runs to 250 residues: MSTSPLSPVASSRADAALVLFSGGQDSSVCLAWALERYARVETVGFDYGQRHHIEMEARVAVRHQVAERFPHWARRLGEDHVLDLTGFGAVAHSALTADVAIEMTERGLPSTFVPGRNLVFLIYAAALADRRGLGALVGGMCETDFSGYPDCRRDTLDAMQSALNLGMDRDFVIETPLMKLTKAQTWALAKSLGGEDLVDLIVVESHTCYQGERGDLHPWGHGCGECPACELRRRGYEEWDAAGREALGA.

Residue 21–31 (FSGGQDSSVCL) participates in ATP binding. Zn(2+) contacts are provided by C209, C224, C227, and C230.

This sequence belongs to the QueC family. Requires Zn(2+) as cofactor.

It carries out the reaction 7-carboxy-7-deazaguanine + NH4(+) + ATP = 7-cyano-7-deazaguanine + ADP + phosphate + H2O + H(+). The protein operates within purine metabolism; 7-cyano-7-deazaguanine biosynthesis. Catalyzes the ATP-dependent conversion of 7-carboxy-7-deazaguanine (CDG) to 7-cyano-7-deazaguanine (preQ(0)). The polypeptide is 7-cyano-7-deazaguanine synthase (Caulobacter sp. (strain K31)).